The chain runs to 325 residues: L-lactate dehydrogenase 1 (325 aa).

NAD(+)-binding positions include valine 17, aspartate 38, lysine 43, tyrosine 68, and 82–83; that span reads GA. Substrate is bound by residues glutamine 85, arginine 91, and 123–126; that span reads NPVD. NAD(+)-binding positions include 121 to 123 and serine 146; that span reads AAN. Position 151-154 (151-154) interacts with substrate; sequence DTAR. 2 residues coordinate beta-D-fructose 1,6-bisphosphate: arginine 156 and histidine 171. Histidine 178 serves as the catalytic Proton acceptor. Phosphotyrosine is present on tyrosine 223. Threonine 232 contributes to the substrate binding site.

Belongs to the LDH/MDH superfamily. LDH family. In terms of assembly, homotetramer.

It localises to the cytoplasm. The catalysed reaction is (S)-lactate + NAD(+) = pyruvate + NADH + H(+). It participates in fermentation; pyruvate fermentation to lactate; (S)-lactate from pyruvate: step 1/1. Its activity is regulated as follows. Allosterically activated by fructose 1,6-bisphosphate (FBP). Its function is as follows. Catalyzes the conversion of lactate to pyruvate. The protein is L-lactate dehydrogenase 1 of Lactococcus lactis subsp. lactis (strain IL1403) (Streptococcus lactis).